Consider the following 115-residue polypeptide: NAD(P)H-quinone oxidoreductase subunit M (115 aa).

Belongs to the complex I NdhM subunit family. In terms of assembly, NDH-1 can be composed of about 15 different subunits; different subcomplexes with different compositions have been identified which probably have different functions.

The protein resides in the cellular thylakoid membrane. It catalyses the reaction a plastoquinone + NADH + (n+1) H(+)(in) = a plastoquinol + NAD(+) + n H(+)(out). The enzyme catalyses a plastoquinone + NADPH + (n+1) H(+)(in) = a plastoquinol + NADP(+) + n H(+)(out). In terms of biological role, NDH-1 shuttles electrons from an unknown electron donor, via FMN and iron-sulfur (Fe-S) centers, to quinones in the respiratory and/or the photosynthetic chain. The immediate electron acceptor for the enzyme in this species is believed to be plastoquinone. Couples the redox reaction to proton translocation, and thus conserves the redox energy in a proton gradient. Cyanobacterial NDH-1 also plays a role in inorganic carbon-concentration. The protein is NAD(P)H-quinone oxidoreductase subunit M of Prochlorococcus marinus (strain MIT 9312).